The following is a 376-amino-acid chain: Nuclear hormone receptor family member nhr-124 (376 aa).

The segment at residues 11–89 (PNICAICHQK…LGMRYHNSSE (79 aa)) is a DNA-binding region (nuclear receptor). NR C4-type zinc fingers lie at residues 14 to 34 (CAIC…CNAC) and 50 to 72 (CKKG…CRSC). The NR LBD domain maps to 125-371 (HLHALNETRY…FSKILTEACR (247 aa)).

Belongs to the nuclear hormone receptor family.

The protein resides in the nucleus. Its function is as follows. Orphan nuclear receptor. This is Nuclear hormone receptor family member nhr-124 (nhr-124) from Caenorhabditis elegans.